The following is a 226-amino-acid chain: 3-dehydroquinate dehydratase (226 aa).

Residues S9, 32–34 (EVR), and R59 contribute to the 3-dehydroquinate site. The active-site Proton donor/acceptor is the H119. The active-site Schiff-base intermediate with substrate is K146. R187, T208, and Q212 together coordinate 3-dehydroquinate.

The protein belongs to the type-I 3-dehydroquinase family. Homodimer.

The enzyme catalyses 3-dehydroquinate = 3-dehydroshikimate + H2O. Its pathway is metabolic intermediate biosynthesis; chorismate biosynthesis; chorismate from D-erythrose 4-phosphate and phosphoenolpyruvate: step 3/7. In terms of biological role, involved in the third step of the chorismate pathway, which leads to the biosynthesis of aromatic amino acids. Catalyzes the cis-dehydration of 3-dehydroquinate (DHQ) and introduces the first double bond of the aromatic ring to yield 3-dehydroshikimate. This is 3-dehydroquinate dehydratase from Desulfotalea psychrophila (strain LSv54 / DSM 12343).